Consider the following 367-residue polypeptide: Phosphoribosylaminoimidazole-succinocarboxamide synthase (367 aa).

This sequence belongs to the SAICAR synthetase family.

The catalysed reaction is 5-amino-1-(5-phospho-D-ribosyl)imidazole-4-carboxylate + L-aspartate + ATP = (2S)-2-[5-amino-1-(5-phospho-beta-D-ribosyl)imidazole-4-carboxamido]succinate + ADP + phosphate + 2 H(+). The protein operates within purine metabolism; IMP biosynthesis via de novo pathway; 5-amino-1-(5-phospho-D-ribosyl)imidazole-4-carboxamide from 5-amino-1-(5-phospho-D-ribosyl)imidazole-4-carboxylate: step 1/2. The sequence is that of Phosphoribosylaminoimidazole-succinocarboxamide synthase from Psychromonas ingrahamii (strain DSM 17664 / CCUG 51855 / 37).